The following is a 908-amino-acid chain: PTS system glucose-specific EIICBA component (908 aa).

Residues 1–264 enclose the PTS EIIC type-1; first part domain; sequence MQISLVKIRN…YAPLWYTSAG (264 aa). Helical transmembrane passes span 31–51, 71–91, 100–120, 155–175, and 189–209; these read LMIP…GDAI, GGNV…AITF, FSAF…IIPV, VFGG…FYAI, and FVPI…LMVW. Residues 265 to 450 form a unknown region; it reads GSLQEIANQQ…VSQFTVAVPS (186 aa). A PTS EIIC type-1; second part domain is found at 451 to 602; the sequence is LNPAQYSQGK…FNLATPGRGG (152 aa). A run of 5 helical transmembrane segments spans residues 459–479, 487–507, 509–529, 536–556, and 571–591; these read GKFP…ILAA, ASSI…TEPF, FTFL…LAAV, LLSA…ILYG, and VPII…FLTI. One can recognise a PTS EIIB type-1 domain in the interval 631–713; sequence QIEAGMLLRA…QDIIQGKVNW (83 aa). Cys653 acts as the Phosphocysteine intermediate; for EIIB activity in catalysis. The PTS EIIA type-1 domain maps to 762-875; sequence DDTFKNRLVG…DPITPFIVMQ (114 aa). His815 functions as the Tele-phosphohistidine intermediate; for EIIA activity in the catalytic mechanism.

The protein localises to the cell membrane. The enzyme catalyses N(pros)-phospho-L-histidyl-[protein] + D-glucose(out) = D-glucose 6-phosphate(in) + L-histidyl-[protein]. Its function is as follows. The phosphoenolpyruvate-dependent sugar phosphotransferase system (sugar PTS), a major carbohydrate active transport system, catalyzes the phosphorylation of incoming sugar substrates concomitantly with their translocation across the cell membrane. This system is involved in glucose transport. This Mycoplasma genitalium (strain ATCC 33530 / DSM 19775 / NCTC 10195 / G37) (Mycoplasmoides genitalium) protein is PTS system glucose-specific EIICBA component (ptsG).